A 110-amino-acid chain; its full sequence is IQ domain-containing protein J (110 aa).

Residues 47 to 67 (ESKVKIIQRAWREYLQRQDPL) enclose the IQ domain. Residues 63 to 99 (RQDPLEKRSPSPPSVSSDKLSSSVSMNTFSDSSTPVS) are disordered. Residues 76–87 (SVSSDKLSSSVS) show a composition bias toward low complexity. Polar residues predominate over residues 88-99 (MNTFSDSSTPVS).

The sequence is that of IQ domain-containing protein J from Mus musculus (Mouse).